The chain runs to 216 residues: Cell envelope integrity protein Cei (216 aa).

The helical transmembrane segment at 25–45 threads the bilayer; that stretch reads PAIVVVAFLVVVTCVMWTLAL.

The protein localises to the cell membrane. Functionally, contributes to cell envelope integrity and virulence. This Mycobacterium tuberculosis (strain ATCC 25618 / H37Rv) protein is Cell envelope integrity protein Cei.